The sequence spans 441 residues: Proline--tRNA ligase (441 aa).

The protein belongs to the class-II aminoacyl-tRNA synthetase family. ProS type 2 subfamily. In terms of assembly, homodimer.

The protein resides in the cytoplasm. The enzyme catalyses tRNA(Pro) + L-proline + ATP = L-prolyl-tRNA(Pro) + AMP + diphosphate. Functionally, catalyzes the attachment of proline to tRNA(Pro) in a two-step reaction: proline is first activated by ATP to form Pro-AMP and then transferred to the acceptor end of tRNA(Pro). The sequence is that of Proline--tRNA ligase from Bartonella tribocorum (strain CIP 105476 / IBS 506).